The sequence spans 400 residues: Inositol polyphosphate 1-phosphatase (400 aa).

Asp54 is a Li(+) binding site. Position 79 (Glu79) interacts with Mg(2+). Glu80 contributes to the Li(+) binding site. Positions 153 and 155 each coordinate Mg(2+). Residues Asp156, Ser157, and Thr158 each coordinate 1D-myo-inositol 1,4-bisphosphate. The segment covering 238-257 (STRSNSEAQSQGTQNPSSEG) has biased composition (polar residues). A disordered region spans residues 238-258 (STRSNSEAQSQGTQNPSSEGS). Residues Ser268, Lys270, Gly290, Ala291, Lys294, and Thr312 each coordinate 1D-myo-inositol 1,4-bisphosphate. Asp317 is a Mg(2+) binding site. Residue Ser318 is modified to Phosphoserine.

It belongs to the inositol monophosphatase superfamily. Monomer. Mg(2+) serves as cofactor.

It carries out the reaction 1D-myo-inositol 1,4-bisphosphate + H2O = 1D-myo-inositol 4-phosphate + phosphate. It catalyses the reaction 1D-myo-inositol 1,3,4-trisphosphate + H2O = 1D-myo-inositol 3,4-bisphosphate + phosphate. The protein operates within signal transduction; phosphatidylinositol signaling pathway. Inhibited by Li(+). In terms of biological role, mg(2+)-dependent phosphatase that catalyzes the hydrolysis of the 1-position phosphate from inositol 1,4-bisphosphate and inositol 1,3,4-trisphosphate and participates in inositol phosphate metabolism. In Bos taurus (Bovine), this protein is Inositol polyphosphate 1-phosphatase.